Consider the following 169-residue polypeptide: Large ribosomal subunit protein uL10 (169 aa).

The protein belongs to the universal ribosomal protein uL10 family. As to quaternary structure, part of the ribosomal stalk of the 50S ribosomal subunit. The N-terminus interacts with L11 and the large rRNA to form the base of the stalk. The C-terminus forms an elongated spine to which L12 dimers bind in a sequential fashion forming a multimeric L10(L12)X complex.

Its function is as follows. Forms part of the ribosomal stalk, playing a central role in the interaction of the ribosome with GTP-bound translation factors. This Rickettsia bellii (strain OSU 85-389) protein is Large ribosomal subunit protein uL10.